Reading from the N-terminus, the 78-residue chain is ATP synthase subunit c (78 aa).

2 helical membrane-spanning segments follow: residues L16–L36 and M57–V77.

The protein belongs to the ATPase C chain family. As to quaternary structure, F-type ATPases have 2 components, F(1) - the catalytic core - and F(0) - the membrane proton channel. F(1) has five subunits: alpha(3), beta(3), gamma(1), delta(1), epsilon(1). F(0) has three main subunits: a(1), b(2) and c(10-14). The alpha and beta chains form an alternating ring which encloses part of the gamma chain. F(1) is attached to F(0) by a central stalk formed by the gamma and epsilon chains, while a peripheral stalk is formed by the delta and b chains.

It is found in the cell inner membrane. F(1)F(0) ATP synthase produces ATP from ADP in the presence of a proton or sodium gradient. F-type ATPases consist of two structural domains, F(1) containing the extramembraneous catalytic core and F(0) containing the membrane proton channel, linked together by a central stalk and a peripheral stalk. During catalysis, ATP synthesis in the catalytic domain of F(1) is coupled via a rotary mechanism of the central stalk subunits to proton translocation. In terms of biological role, key component of the F(0) channel; it plays a direct role in translocation across the membrane. A homomeric c-ring of between 10-14 subunits forms the central stalk rotor element with the F(1) delta and epsilon subunits. This Hyphomonas neptunium (strain ATCC 15444) protein is ATP synthase subunit c.